We begin with the raw amino-acid sequence, 259 residues long: Ribose-5-phosphate isomerase (259 aa).

It belongs to the ribose 5-phosphate isomerase family.

The protein resides in the cytoplasm. The enzyme catalyses aldehydo-D-ribose 5-phosphate = D-ribulose 5-phosphate. It functions in the pathway carbohydrate degradation; pentose phosphate pathway; D-ribose 5-phosphate from D-ribulose 5-phosphate (non-oxidative stage): step 1/1. The sequence is that of Ribose-5-phosphate isomerase (RKI1) from Vanderwaltozyma polyspora (strain ATCC 22028 / DSM 70294 / BCRC 21397 / CBS 2163 / NBRC 10782 / NRRL Y-8283 / UCD 57-17) (Kluyveromyces polysporus).